The sequence spans 941 residues: Cell wall protein IFF9 (941 aa).

An N-terminal signal peptide occupies residues 1-20; the sequence is MQLFQNILVSIALLTQIVFA. Asn-917 is lipidated: GPI-anchor amidated asparagine. Positions 918–941 are cleaved as a propeptide — removed in mature form; the sequence is GSNKESIENIKYLALVVFGLMMFM.

The protein belongs to the HYR1/IFF family. Post-translationally, the GPI-anchor is attached to the protein in the endoplasmic reticulum and serves to target the protein to the cell surface. There, the glucosamine-inositol phospholipid moiety is cleaved off and the GPI-modified mannoprotein is covalently attached via its lipidless GPI glycan remnant to the 1,6-beta-glucan of the outer cell wall layer.

It is found in the secreted. The protein localises to the cell wall. The protein resides in the membrane. Functionally, GPI-anchored cell wall protein involved in cell wall organization, hyphal growth, as well as in host-fungal interaction and virulence. In Candida albicans (strain SC5314 / ATCC MYA-2876) (Yeast), this protein is Cell wall protein IFF9 (IFF9).